We begin with the raw amino-acid sequence, 356 residues long: Tyrosine recombinase XerS (356 aa).

One can recognise a Core-binding (CB) domain in the interval 16-121 (LMPWYVLEYY…ALSSLYKYLT (106 aa)). Residues 169–354 (GFLTYIDQEH…VNDEQKNALD (186 aa)) form the Tyr recombinase domain. Active-site residues include Arg-210, Lys-234, His-306, Arg-309, and His-332. The active-site O-(3'-phospho-DNA)-tyrosine intermediate is Tyr-341.

Belongs to the 'phage' integrase family. XerS subfamily.

It localises to the cytoplasm. With respect to regulation, ftsK is required for recombination. Functionally, site-specific tyrosine recombinase, which acts by catalyzing the cutting and rejoining of the recombining DNA molecules. Essential to convert dimers of the bacterial chromosome into monomers to permit their segregation at cell division. This chain is Tyrosine recombinase XerS, found in Streptococcus pneumoniae serotype 2 (strain D39 / NCTC 7466).